A 537-amino-acid polypeptide reads, in one-letter code: Glutamyl-tRNA reductase, chloroplastic (537 aa).

A chloroplast-targeting transit peptide spans 1–48 (MMASTTSATAAGGAFAAAKTRAGSSAAGGGACARVAAGGRRRSGVVVR). Residues 134–137 (TCNR), S194, 199–201 (EGQ), and Q205 contribute to the substrate site. Residue C135 is the Nucleophile of the active site. NADP(+) is bound at residue 276–281 (GAGKMG).

Belongs to the glutamyl-tRNA reductase family.

The protein resides in the plastid. The protein localises to the chloroplast. It catalyses the reaction (S)-4-amino-5-oxopentanoate + tRNA(Glu) + NADP(+) = L-glutamyl-tRNA(Glu) + NADPH + H(+). The protein operates within porphyrin-containing compound metabolism; protoporphyrin-IX biosynthesis; 5-aminolevulinate from L-glutamyl-tRNA(Glu): step 1/2. Functionally, catalyzes the NADPH-dependent reduction of glutamyl-tRNA(Glu) to glutamate 1-semialdehyde (GSA). This Oryza sativa subsp. indica (Rice) protein is Glutamyl-tRNA reductase, chloroplastic.